The chain runs to 199 residues: Probable nicotinate-nucleotide adenylyltransferase (199 aa).

It belongs to the NadD family.

The catalysed reaction is nicotinate beta-D-ribonucleotide + ATP + H(+) = deamido-NAD(+) + diphosphate. It participates in cofactor biosynthesis; NAD(+) biosynthesis; deamido-NAD(+) from nicotinate D-ribonucleotide: step 1/1. Catalyzes the reversible adenylation of nicotinate mononucleotide (NaMN) to nicotinic acid adenine dinucleotide (NaAD). The sequence is that of Probable nicotinate-nucleotide adenylyltransferase from Roseiflexus castenholzii (strain DSM 13941 / HLO8).